A 319-amino-acid polypeptide reads, in one-letter code: GTP 3',8-cyclase (319 aa).

The region spanning lysine 4–leucine 227 is the Radical SAM core domain. GTP is bound at residue arginine 13. Cysteine 20 and cysteine 24 together coordinate [4Fe-4S] cluster. Tyrosine 26 is a binding site for S-adenosyl-L-methionine. Cysteine 27 serves as a coordination point for [4Fe-4S] cluster. Arginine 63 is a GTP binding site. Position 67 (glycine 67) interacts with S-adenosyl-L-methionine. Position 94 (threonine 94) interacts with GTP. Residue serine 118 coordinates S-adenosyl-L-methionine. Lysine 155 provides a ligand contact to GTP. Residue methionine 189 coordinates S-adenosyl-L-methionine. The [4Fe-4S] cluster site is built by cysteine 249 and cysteine 252. Arginine 254–arginine 256 is a GTP binding site. Cysteine 266 is a binding site for [4Fe-4S] cluster.

Belongs to the radical SAM superfamily. MoaA family. Monomer and homodimer. The cofactor is [4Fe-4S] cluster.

The catalysed reaction is GTP + AH2 + S-adenosyl-L-methionine = (8S)-3',8-cyclo-7,8-dihydroguanosine 5'-triphosphate + 5'-deoxyadenosine + L-methionine + A + H(+). The protein operates within cofactor biosynthesis; molybdopterin biosynthesis. In terms of biological role, catalyzes the cyclization of GTP to (8S)-3',8-cyclo-7,8-dihydroguanosine 5'-triphosphate. The chain is GTP 3',8-cyclase from Clostridium botulinum (strain Langeland / NCTC 10281 / Type F).